The primary structure comprises 404 residues: Multidrug resistance protein MdtG (404 aa).

11 helical membrane-spanning segments follow: residues 19-39 (LGCF…PLYV), 56-76 (LVFS…GGLA), 90-110 (LGMA…QFLI), 113-133 (ALLG…ATQV), 144-164 (TLST…GLLA), 171-191 (PVFF…FFFI), 222-242 (LFVT…ILTL), 254-274 (IAFI…LSAP), 288-308 (ILIV…FVQT), 317-337 (FLLG…LVYN), and 376-396 (AVFC…WNSL).

It belongs to the major facilitator superfamily. DHA1 family. MdtG (TC 2.A.1.2.20) subfamily.

Its subcellular location is the cell inner membrane. The protein is Multidrug resistance protein MdtG of Salmonella schwarzengrund (strain CVM19633).